The sequence spans 360 residues: Photosystem II protein D1 3 (360 aa).

The next 3 membrane-spanning stretches (helical) occupy residues 29–46 (YVGW…TAAI), 118–133 (HFLI…QWEL), and 142–156 (WIPV…AATA). His-118 contributes to the chlorophyll a binding site. Tyr-126 provides a ligand contact to pheophytin a. Positions 170 and 189 each coordinate [CaMn4O5] cluster. Residues 197 to 218 (FHMIGVAGVFGGALFSAMHGSL) traverse the membrane as a helical segment. His-198 provides a ligand contact to chlorophyll a. Residues His-215 and 264–265 (SF) contribute to the a quinone site. His-215 contacts Fe cation. His-272 provides a ligand contact to Fe cation. Residues 274-288 (FLAAWPVIGIWFAAL) form a helical membrane-spanning segment. [CaMn4O5] cluster-binding residues include His-332, Glu-333, Asp-342, and Ala-344. Residues 345 to 360 (SGEVQPIALTAPAIAS) constitute a propeptide that is removed on maturation.

Belongs to the reaction center PufL/M/PsbA/D family. In terms of assembly, PSII is composed of 1 copy each of membrane proteins PsbA, PsbB, PsbC, PsbD, PsbE, PsbF, PsbH, PsbI, PsbJ, PsbK, PsbL, PsbM, PsbT, PsbX, PsbY, PsbZ, Psb30/Ycf12, peripheral proteins PsbO, CyanoQ (PsbQ), PsbU, PsbV and a large number of cofactors. It forms dimeric complexes. The cofactor is The D1/D2 heterodimer binds P680, chlorophylls that are the primary electron donor of PSII, and subsequent electron acceptors. It shares a non-heme iron and each subunit binds pheophytin, quinone, additional chlorophylls, carotenoids and lipids. D1 provides most of the ligands for the Mn4-Ca-O5 cluster of the oxygen-evolving complex (OEC). There is also a Cl(-1) ion associated with D1 and D2, which is required for oxygen evolution. The PSII complex binds additional chlorophylls, carotenoids and specific lipids.. In terms of processing, tyr-161 forms a radical intermediate that is referred to as redox-active TyrZ, YZ or Y-Z. Post-translationally, C-terminally processed by CtpA; processing is essential to allow assembly of the oxygen-evolving complex and thus photosynthetic growth.

The protein resides in the cellular thylakoid membrane. The catalysed reaction is 2 a plastoquinone + 4 hnu + 2 H2O = 2 a plastoquinol + O2. Its function is as follows. Photosystem II (PSII) is a light-driven water:plastoquinone oxidoreductase that uses light energy to abstract electrons from H(2)O, generating O(2) and a proton gradient subsequently used for ATP formation. It consists of a core antenna complex that captures photons, and an electron transfer chain that converts photonic excitation into a charge separation. The D1/D2 (PsbA/PsbD) reaction center heterodimer binds P680, the primary electron donor of PSII as well as several subsequent electron acceptors. In Nostoc sp. (strain PCC 7120 / SAG 25.82 / UTEX 2576), this protein is Photosystem II protein D1 3.